Consider the following 434-residue polypeptide: Nicotinate phosphoribosyltransferase (434 aa).

Histidine 242 carries the post-translational modification Phosphohistidine; by autocatalysis.

This sequence belongs to the NAPRTase family. Post-translationally, transiently phosphorylated on a His residue during the reaction cycle. Phosphorylation strongly increases the affinity for substrates and increases the rate of nicotinate D-ribonucleotide production. Dephosphorylation regenerates the low-affinity form of the enzyme, leading to product release.

The catalysed reaction is nicotinate + 5-phospho-alpha-D-ribose 1-diphosphate + ATP + H2O = nicotinate beta-D-ribonucleotide + ADP + phosphate + diphosphate. It participates in cofactor biosynthesis; NAD(+) biosynthesis; nicotinate D-ribonucleotide from nicotinate: step 1/1. In terms of biological role, catalyzes the synthesis of beta-nicotinate D-ribonucleotide from nicotinate and 5-phospho-D-ribose 1-phosphate at the expense of ATP. The polypeptide is Nicotinate phosphoribosyltransferase (Bradyrhizobium diazoefficiens (strain JCM 10833 / BCRC 13528 / IAM 13628 / NBRC 14792 / USDA 110)).